The primary structure comprises 557 residues: D-arabinono-1,4-lactone oxidase (557 aa).

In terms of domain architecture, FAD-binding PCMH-type spans 26–209 (FFCKPQAIFQ…THVTLRTIPK (184 aa)). His-63 carries the post-translational modification Pros-8alpha-FAD histidine.

This sequence belongs to the oxygen-dependent FAD-linked oxidoreductase family. FAD serves as cofactor.

It is found in the mitochondrion membrane. The catalysed reaction is D-arabinono-1,4-lactone + O2 = dehydro-D-arabinono-1,4-lactone + H2O2 + H(+). Its pathway is cofactor biosynthesis; D-erythroascorbate biosynthesis; dehydro-D-arabinono-1,4-lactone from D-arabinose: step 2/2. The chain is D-arabinono-1,4-lactone oxidase (ALO1) from Debaryomyces hansenii (strain ATCC 36239 / CBS 767 / BCRC 21394 / JCM 1990 / NBRC 0083 / IGC 2968) (Yeast).